The primary structure comprises 302 residues: Large ribosomal subunit protein bL28m (302 aa).

This sequence belongs to the bacterial ribosomal protein bL28 family. As to quaternary structure, component of the mitochondrial ribosome large subunit (39S) which comprises a 16S rRNA and about 50 distinct proteins.

The protein localises to the mitochondrion. The chain is Large ribosomal subunit protein bL28m (mRpL28) from Drosophila melanogaster (Fruit fly).